The chain runs to 810 residues: Bifunctional aspartokinase/homoserine dehydrogenase 2 (810 aa).

An aspartokinase region spans residues 2 to 252; it reads SVIAQAGAKG…VKDACLLPLL (251 aa). Residues 253 to 463 form an interface region; it reads RLDEASELAR…RAEKRIGLVL (211 aa). A homoserine dehydrogenase region spans residues 464 to 810; sequence FGKGNIGSRW…SDINRLAQLL (347 aa). 2 residues coordinate NADP(+): Asn-468 and Ile-469. Positions 469 and 498 each coordinate NAD(+). Ile-469 provides a ligand contact to NADPH. NADP(+) is bound by residues Arg-501, Thr-549, and Lys-573. Residue Thr-549 participates in NAD(+) binding. 2 residues coordinate NADPH: Thr-549 and Lys-573. Val-603, Ala-605, and Leu-607 together coordinate Na(+). NADP(+)-binding residues include Gly-658 and Glu-661. The L-homoserine site is built by Glu-661 and Asp-672. Lys-676 functions as the Proton donor in the catalytic mechanism. An NADP(+)-binding site is contributed by Gly-791. Position 791 (Gly-791) interacts with NAD(+). Residue Gly-791 coordinates NADPH.

It in the N-terminal section; belongs to the aspartokinase family. This sequence in the C-terminal section; belongs to the homoserine dehydrogenase family. Homotetramer. A metal cation is required as a cofactor.

It carries out the reaction L-homoserine + NADP(+) = L-aspartate 4-semialdehyde + NADPH + H(+). The catalysed reaction is L-homoserine + NAD(+) = L-aspartate 4-semialdehyde + NADH + H(+). It catalyses the reaction L-aspartate + ATP = 4-phospho-L-aspartate + ADP. It participates in amino-acid biosynthesis; L-lysine biosynthesis via DAP pathway; (S)-tetrahydrodipicolinate from L-aspartate: step 1/4. Its pathway is amino-acid biosynthesis; L-methionine biosynthesis via de novo pathway; L-homoserine from L-aspartate: step 1/3. It functions in the pathway amino-acid biosynthesis; L-methionine biosynthesis via de novo pathway; L-homoserine from L-aspartate: step 3/3. The protein operates within amino-acid biosynthesis; L-threonine biosynthesis; L-threonine from L-aspartate: step 1/5. It participates in amino-acid biosynthesis; L-threonine biosynthesis; L-threonine from L-aspartate: step 3/5. Bifunctional aspartate kinase and homoserine dehydrogenase that catalyzes the first and the third steps toward the synthesis of lysine, methionine and threonine from aspartate. This Escherichia coli (strain K12) protein is Bifunctional aspartokinase/homoserine dehydrogenase 2 (metL).